Consider the following 106-residue polypeptide: Molt-inhibiting hormone (106 aa).

Positions 1 to 29 are cleaved as a signal peptide; sequence MVNQVAQCFTVRRVWLVVVVGLLVHQTTA. Intrachain disulfides connect Cys-36–Cys-73, Cys-53–Cys-69, and Cys-56–Cys-82. Ala-104 bears the Alanine amide mark. Positions 105 to 106 are excised as a propeptide; the sequence is GR.

In terms of tissue distribution, sinus gland of the eyestalk.

The protein localises to the secreted. In terms of biological role, inhibits Y-organs where molting hormone (ecdysteroid) is secreted. A molting cycle is initiated when MIH secretion diminishes or stops. This Faxonius limosus (Spinycheek crayfish) protein is Molt-inhibiting hormone.